A 349-amino-acid chain; its full sequence is Aquaporin-4 (349 aa).

2 helical membrane-spanning segments follow: residues 92–112 (LSES…AATA) and 125–147 (AFYH…GGLL). Positions 148 to 150 (NPA) match the NPA 1 motif. Residues 167-187 (LIYMSAQYFGAFIASAVVYLI) traverse the membrane as a helical segment. N-linked (GlcNAc...) asparagine glycosylation is found at N194 and N207. A run of 2 helical transmembrane segments spans residues 225-245 (GAIF…LSIC) and 256-276 (MFPF…SYSA). Residues 281–283 (NPA) carry the NPA 2 motif. The helical transmembrane segment at 314-334 (WLFPYVGALLGGVIYEIFIGI) threads the bilayer.

This sequence belongs to the MIP/aquaporin (TC 1.A.8) family.

The protein localises to the cell membrane. Aquaglyceroporin that may modulate the water content and osmolytes during anhydrobiosis. The sequence is that of Aquaporin-4 from Milnesium tardigradum (Water bear).